The following is an 83-amino-acid chain: Putative beta-neurotoxin RjAa17f (83 aa).

The signal sequence occupies residues 1 to 18 (MKILIFIIASFMLIGVEC). The LCN-type CS-alpha/beta domain occupies 19 to 82 (KEGYPMGRNG…VWDFSNIKCR (64 aa)). Disulfide bonds link C29-C81, C33-C55, C40-C62, and C44-C64.

Belongs to the long (4 C-C) scorpion toxin superfamily. Sodium channel inhibitor family. Beta subfamily. In terms of tissue distribution, expressed by the venom gland.

The protein resides in the secreted. Its function is as follows. Beta toxins bind voltage-independently at site-4 of sodium channels (Nav) and shift the voltage of activation toward more negative potentials thereby affecting sodium channel activation and promoting spontaneous and repetitive firing. The sequence is that of Putative beta-neurotoxin RjAa17f from Rhopalurus junceus (Caribbean blue scorpion).